Consider the following 179-residue polypeptide: Large ribosomal subunit protein uL6 (179 aa).

It belongs to the universal ribosomal protein uL6 family. Part of the 50S ribosomal subunit.

In terms of biological role, this protein binds to the 23S rRNA, and is important in its secondary structure. It is located near the subunit interface in the base of the L7/L12 stalk, and near the tRNA binding site of the peptidyltransferase center. The protein is Large ribosomal subunit protein uL6 of Prochlorococcus marinus (strain MIT 9515).